The sequence spans 634 residues: DNA-directed RNA polymerase subunit gamma (634 aa).

4 residues coordinate Zn(2+): cysteine 74, cysteine 76, cysteine 89, and cysteine 92. The Mg(2+) site is built by aspartate 471, aspartate 473, and aspartate 475.

Belongs to the RNA polymerase beta' chain family. RpoC1 subfamily. In cyanobacteria the RNAP catalytic core is composed of 2 alpha, 1 beta, 1 beta', 1 gamma and 1 omega subunit. When a sigma factor is associated with the core the holoenzyme is formed, which can initiate transcription. Mg(2+) serves as cofactor. Zn(2+) is required as a cofactor.

It carries out the reaction RNA(n) + a ribonucleoside 5'-triphosphate = RNA(n+1) + diphosphate. DNA-dependent RNA polymerase catalyzes the transcription of DNA into RNA using the four ribonucleoside triphosphates as substrates. The chain is DNA-directed RNA polymerase subunit gamma from Parasynechococcus marenigrum (strain WH8102).